The primary structure comprises 251 residues: Imidazole glycerol phosphate synthase subunit HisF (251 aa).

Residues D12 and D131 contribute to the active site.

Belongs to the HisA/HisF family. In terms of assembly, heterodimer of HisH and HisF.

The protein localises to the cytoplasm. It carries out the reaction 5-[(5-phospho-1-deoxy-D-ribulos-1-ylimino)methylamino]-1-(5-phospho-beta-D-ribosyl)imidazole-4-carboxamide + L-glutamine = D-erythro-1-(imidazol-4-yl)glycerol 3-phosphate + 5-amino-1-(5-phospho-beta-D-ribosyl)imidazole-4-carboxamide + L-glutamate + H(+). It participates in amino-acid biosynthesis; L-histidine biosynthesis; L-histidine from 5-phospho-alpha-D-ribose 1-diphosphate: step 5/9. In terms of biological role, IGPS catalyzes the conversion of PRFAR and glutamine to IGP, AICAR and glutamate. The HisF subunit catalyzes the cyclization activity that produces IGP and AICAR from PRFAR using the ammonia provided by the HisH subunit. The polypeptide is Imidazole glycerol phosphate synthase subunit HisF (Streptomyces griseus subsp. griseus (strain JCM 4626 / CBS 651.72 / NBRC 13350 / KCC S-0626 / ISP 5235)).